The sequence spans 207 residues: Small ribosomal subunit protein uS4 (207 aa).

Residues 96–159 (RRLDNVVYRL…RASTFIADNI (64 aa)) form the S4 RNA-binding domain.

Belongs to the universal ribosomal protein uS4 family. In terms of assembly, part of the 30S ribosomal subunit. Contacts protein S5. The interaction surface between S4 and S5 is involved in control of translational fidelity.

In terms of biological role, one of the primary rRNA binding proteins, it binds directly to 16S rRNA where it nucleates assembly of the body of the 30S subunit. Functionally, with S5 and S12 plays an important role in translational accuracy. The protein is Small ribosomal subunit protein uS4 of Leptospira borgpetersenii serovar Hardjo-bovis (strain JB197).